The primary structure comprises 281 residues: Nucleotide-binding protein Daro_0070 (281 aa).

8–15 is an ATP binding site; it reads GLSGSGKS. A GTP-binding site is contributed by 57-60; it reads DARS.

It belongs to the RapZ-like family.

In terms of biological role, displays ATPase and GTPase activities. The sequence is that of Nucleotide-binding protein Daro_0070 from Dechloromonas aromatica (strain RCB).